Here is a 208-residue protein sequence, read N- to C-terminus: CASP-like protein 1D1 (208 aa).

A disordered region spans residues 1 to 36 (MSSVDTEKPAPPPLETEAPPPPPPPPPPPPPPPPPP). Residues 1–41 (MSSVDTEKPAPPPLETEAPPPPPPPPPPPPPPPPPPAGYSA) lie on the Cytoplasmic side of the membrane. Positions 9–36 (PAPPPLETEAPPPPPPPPPPPPPPPPPP) are enriched in pro residues. The chain crosses the membrane as a helical span at residues 42-62 (LDVVLRILLLGSAVASVVVMV). The Extracellular segment spans residues 63–89 (TSVQTKLIAVAGVPVLVSNKAKFQNSP). The helical transmembrane segment at 90–110 (AFIYFVAALSVVGLYSIITTL) threads the bilayer. The Cytoplasmic segment spans residues 111–133 (ASFIFISKPSCSTKTILHLAIWD). The helical transmembrane segment at 134–154 (VLMLGLAASATGTAGGVAYVG) threads the bilayer. The Extracellular segment spans residues 155-180 (LKGNSHVGWNKVCNTYDKFCRHVGGS). Residues 181–201 (IAVALFASILLVLLVWLSLFT) traverse the membrane as a helical segment. The Cytoplasmic portion of the chain corresponds to 202–208 (LYSRIRK).

This sequence belongs to the Casparian strip membrane proteins (CASP) family. As to quaternary structure, homodimer and heterodimers.

The protein localises to the cell membrane. The sequence is that of CASP-like protein 1D1 from Vitis vinifera (Grape).